A 264-amino-acid polypeptide reads, in one-letter code: Thymidylate synthase (264 aa).

Arg21 is a binding site for dUMP. His51 is a binding site for (6R)-5,10-methylene-5,6,7,8-tetrahydrofolate. DUMP is bound at residue 126–127 (RR). The active-site Nucleophile is Cys146. DUMP contacts are provided by residues 166 to 169 (RSAD), Asn177, and 207 to 209 (HIY). Asp169 serves as a coordination point for (6R)-5,10-methylene-5,6,7,8-tetrahydrofolate. A (6R)-5,10-methylene-5,6,7,8-tetrahydrofolate-binding site is contributed by Ala263.

It belongs to the thymidylate synthase family. Bacterial-type ThyA subfamily. Homodimer.

The protein localises to the cytoplasm. The enzyme catalyses dUMP + (6R)-5,10-methylene-5,6,7,8-tetrahydrofolate = 7,8-dihydrofolate + dTMP. Its pathway is pyrimidine metabolism; dTTP biosynthesis. In terms of biological role, catalyzes the reductive methylation of 2'-deoxyuridine-5'-monophosphate (dUMP) to 2'-deoxythymidine-5'-monophosphate (dTMP) while utilizing 5,10-methylenetetrahydrofolate (mTHF) as the methyl donor and reductant in the reaction, yielding dihydrofolate (DHF) as a by-product. This enzymatic reaction provides an intracellular de novo source of dTMP, an essential precursor for DNA biosynthesis. This chain is Thymidylate synthase, found in Methylobacillus flagellatus (strain ATCC 51484 / DSM 6875 / VKM B-1610 / KT).